The primary structure comprises 72 residues: Translation initiation factor IF-1 (72 aa).

In terms of domain architecture, S1-like spans 1-72 (MSKEDVIEVE…TRGRITWRAK (72 aa)).

It belongs to the IF-1 family. Component of the 30S ribosomal translation pre-initiation complex which assembles on the 30S ribosome in the order IF-2 and IF-3, IF-1 and N-formylmethionyl-tRNA(fMet); mRNA recruitment can occur at any time during PIC assembly.

It localises to the cytoplasm. Functionally, one of the essential components for the initiation of protein synthesis. Stabilizes the binding of IF-2 and IF-3 on the 30S subunit to which N-formylmethionyl-tRNA(fMet) subsequently binds. Helps modulate mRNA selection, yielding the 30S pre-initiation complex (PIC). Upon addition of the 50S ribosomal subunit IF-1, IF-2 and IF-3 are released leaving the mature 70S translation initiation complex. In Acetivibrio thermocellus (strain ATCC 27405 / DSM 1237 / JCM 9322 / NBRC 103400 / NCIMB 10682 / NRRL B-4536 / VPI 7372) (Clostridium thermocellum), this protein is Translation initiation factor IF-1.